Here is a 183-residue protein sequence, read N- to C-terminus: Potassium-transporting ATPase KdpC subunit (183 aa).

The chain crosses the membrane as a helical span at residues 10–30 (LTVFTLILFAVIYPLAIYGIA).

It belongs to the KdpC family. As to quaternary structure, the system is composed of three essential subunits: KdpA, KdpB and KdpC.

The protein resides in the cell inner membrane. Its function is as follows. Part of the high-affinity ATP-driven potassium transport (or Kdp) system, which catalyzes the hydrolysis of ATP coupled with the electrogenic transport of potassium into the cytoplasm. This subunit acts as a catalytic chaperone that increases the ATP-binding affinity of the ATP-hydrolyzing subunit KdpB by the formation of a transient KdpB/KdpC/ATP ternary complex. This chain is Potassium-transporting ATPase KdpC subunit, found in Flavobacterium johnsoniae (strain ATCC 17061 / DSM 2064 / JCM 8514 / BCRC 14874 / CCUG 350202 / NBRC 14942 / NCIMB 11054 / UW101) (Cytophaga johnsonae).